A 418-amino-acid polypeptide reads, in one-letter code: L-glutamine:2-deoxy-scyllo-inosose aminotransferase (418 aa).

Position 192 is an N6-(pyridoxal phosphate)lysine (Lys-192).

It belongs to the DegT/DnrJ/EryC1 family. L-glutamine:2-deoxy-scyllo-inosose/scyllo-inosose aminotransferase subfamily. Pyridoxal 5'-phosphate is required as a cofactor.

It carries out the reaction 2-deoxy-L-scyllo-inosose + L-glutamine = 2-deoxy-scyllo-inosamine + 2-oxoglutaramate. It catalyses the reaction 3-amino-2,3-dideoxy-scyllo-inosose + L-glutamine = 2-deoxystreptamine + 2-oxoglutaramate. The protein operates within metabolic intermediate biosynthesis; 2-deoxystreptamine biosynthesis; 2-deoxystreptamine from D-glucose 6-phosphate: step 2/4. Its pathway is metabolic intermediate biosynthesis; 2-deoxystreptamine biosynthesis; 2-deoxystreptamine from D-glucose 6-phosphate: step 4/4. It participates in antibiotic biosynthesis; butirosin biosynthesis. Functionally, catalyzes the PLP-dependent transamination of 2-deoxy-scyllo-inosose (2-DOI) to form 2-deoxy-scyllo-inosamine (2-DOIA) using L-glutamine as the amino donor. Also catalyzes the transamination of 3-amino-2,3-dideoxy-scyllo-inosose (keto-2-DOIA) into 2-deoxystreptamine (2-DOS). The chain is L-glutamine:2-deoxy-scyllo-inosose aminotransferase (btrR) from Niallia circulans (Bacillus circulans).